The chain runs to 517 residues: Xyloglucan galactosyltransferase XLT2 (517 aa).

The disordered stretch occupies residues 1-31; the sequence is MLPVSNPSSPEHLLKKSRTPDSTTSIDRKNS. The Cytoplasmic portion of the chain corresponds to 1 to 49; that stretch reads MLPVSNPSSPEHLLKKSRTPDSTTSIDRKNSFNSLHSVGNRSSYIAASR. A compositionally biased stretch (polar residues) spans 20–31; the sequence is PDSTTSIDRKNS. The chain crosses the membrane as a helical; Signal-anchor for type II membrane protein span at residues 50–70; the sequence is SHCTWLILSLLSLQLILFLTL. At 71-517 the chain is on the lumenal side; the sequence is RSIPFPHRHI…KEQEKWYKWR (447 aa). Residues Asn250, Asn288, Asn377, and Asn449 are each glycosylated (N-linked (GlcNAc...) asparagine).

It belongs to the glycosyltransferase 47 family. Interacts with CSLC4, FUT1, XXT2 and XXT5. In terms of tissue distribution, expressed in roots, hypocotyls, cotyledons, leaves, stems and flowers.

It localises to the golgi apparatus membrane. Functionally, functions in xyloglucan synthesis by adding side chains to the xylosylated glucan backbone. Involved in galactosylating hemicellulose xyloglucan (XyG) at the second position of the XXXG motif to form XLXG. Associates with other xyloglucan-synthesizing enzymes to form multiprotein complexes for xyloglucan synthesis in the Golgi. This Arabidopsis thaliana (Mouse-ear cress) protein is Xyloglucan galactosyltransferase XLT2.